We begin with the raw amino-acid sequence, 111 residues long: WAP four-disulfide core domain protein 12 (111 aa).

The first 23 residues, 1-23 (MGSSSFLVLMVSLTLVTLVAAEG), serve as a signal peptide directing secretion. The WAP domain maps to 27 to 74 (GIEKAGVCPADNVRCFKSDPPQCHTDQDCLGERKCCYLHCGFKCVIPV). 4 cysteine pairs are disulfide-bonded: C34-C62, C41-C66, C49-C61, and C55-C70. The tract at residues 80 to 111 (GGNKDEDVSGPCPEPGWEAKSPGSSSTGCPQK) is disordered. Over residues 101–111 (PGSSSTGCPQK) the composition is skewed to polar residues.

Its subcellular location is the secreted. Functionally, antibacterial protein. Putative acid-stable proteinase inhibitor. This Chlorocebus aethiops (Green monkey) protein is WAP four-disulfide core domain protein 12 (WFDC12).